The sequence spans 172 residues: RNA silencing suppressor p19 (172 aa).

Positions 1-20 (MERAIQGNDAREQANSERWD) are enriched in basic and acidic residues. The interval 1 to 38 (MERAIQGNDAREQANSERWDGGSGGTTSPFKLPDESPS) is disordered.

This sequence belongs to the tombusviruses protein p19 family. Homodimer.

Functionally, acts as a suppressor of RNA-mediated gene silencing, also known as post-transcriptional gene silencing (PTGS), a mechanism of plant viral defense that limits the accumulation of viral RNAs. Binds to short interfering RNAs (siRNAs) with high affinity. Acts as a molecular caliper to specifically select siRNAs based on the length of the duplex region of the RNA. This chain is RNA silencing suppressor p19, found in Capsicum annuum (Capsicum pepper).